The sequence spans 855 residues: DNA mismatch repair protein MutS (855 aa).

617–624 (GPNMGGKS) contacts ATP.

This sequence belongs to the DNA mismatch repair MutS family.

This protein is involved in the repair of mismatches in DNA. It is possible that it carries out the mismatch recognition step. This protein has a weak ATPase activity. This is DNA mismatch repair protein MutS from Baumannia cicadellinicola subsp. Homalodisca coagulata.